Reading from the N-terminus, the 465-residue chain is E3 ubiquitin-protein ligase TRIM38 (465 aa).

The RING-type zinc finger occupies 16-63 (CSICLSLMTNPVSINCGHSYCHLCITDFFKNPSQKQLRQETFCCPQCR). Ser-70 carries the phosphoserine modification. A B box-type zinc finger spans residues 88–129 (DQEMSCEEHGEQFHLFCEDEGQLICWRCERAPQHKGHTTALV). Cys-93, His-96, Cys-115, and His-121 together coordinate Zn(2+). In terms of domain architecture, B30.2/SPRY spans 274-465 (CNVSKLYFDV…SPLFLPPPGD (192 aa)).

In terms of assembly, interacts (via B30.2/SPRY domain) with TAB2 and TAB3. In terms of tissue distribution, ubiquitous.

It is found in the cytoplasm. It catalyses the reaction S-ubiquitinyl-[E2 ubiquitin-conjugating enzyme]-L-cysteine + [acceptor protein]-L-lysine = [E2 ubiquitin-conjugating enzyme]-L-cysteine + N(6)-ubiquitinyl-[acceptor protein]-L-lysine.. The protein operates within protein modification; protein ubiquitination. Its pathway is protein modification; protein sumoylation. E3 ubiquitin-protein and E3 SUMO-protein ligase that acts as a regulator of innate immunity. Acts as a negative regulator of type I interferon IFN-beta production by catalyzing 'Lys-48'-linked polyubiquitination of AZI2/NAP1, leading to its degradation. Mediates 'Lys-48'-linked polyubiquitination and proteasomal degradation of the critical TLR adapter TICAM1, inhibiting TLR3-mediated type I interferon signaling. Acts as positive regulator of the cGAS-STING pathway by acting as a E3 SUMO-protein ligase: mediates sumoylation of CGAS and STING, preventing their degradation and thereby activating the innate immune response to DNA virus. Also acts as a negative regulator of NF-kappa-B signaling independently of its E3 protein ligase activity by promoting lysosome-dependent degradation of TAB2 and TAB3 adapters. This chain is E3 ubiquitin-protein ligase TRIM38, found in Homo sapiens (Human).